Reading from the N-terminus, the 219-residue chain is Small ribosomal subunit protein uS3 (219 aa).

Residues 38–107 (IREYIENKMK…RVHINVVEVK (70 aa)) enclose the KH type-2 domain.

The protein belongs to the universal ribosomal protein uS3 family. Part of the 30S ribosomal subunit. Forms a tight complex with proteins S10 and S14.

In terms of biological role, binds the lower part of the 30S subunit head. Binds mRNA in the 70S ribosome, positioning it for translation. The sequence is that of Small ribosomal subunit protein uS3 from Exiguobacterium sp. (strain ATCC BAA-1283 / AT1b).